Here is a 298-residue protein sequence, read N- to C-terminus: HTH-type transcriptional regulator YhaJ (298 aa).

Positions 7–64 (LTLEALRVMDAIDRRGSFAAAADELGRVPSALSYTMQKLEEELDVVLFDRSGHRTKFT) constitute an HTH lysR-type domain. Positions 24-43 (FAAAADELGRVPSALSYTMQ) form a DNA-binding region, H-T-H motif.

It belongs to the LysR transcriptional regulatory family.

Positive regulator partially required for expression of genes in the locus of effacement (LEE) large pathogenicity island (PAI). Also partially responsible for expression of neighboring gene dlsT (yhaO) during late exponential growth. Binds to DNA of promoter 1 in LEE and DNA from the dlsT promoter region. This Escherichia coli O157:H7 protein is HTH-type transcriptional regulator YhaJ (yhaJ).